A 1035-amino-acid polypeptide reads, in one-letter code: DNA polymerase I B, mitochondrial (1035 aa).

The transit peptide at 1–42 directs the protein to the mitochondrion; it reads MAVAPPLPPAPARLLRRWQGSSPWLSSSFGRTRYFSRPAFAA. Residues 100 to 124 are disordered; that stretch reads TNGTTPLRVGNLRHDPSEDIRSSNY. Residues 111–120 show a composition bias toward basic and acidic residues; it reads LRHDPSEDIR. The 3'-5' exonuclease domain occupies 317-478; sequence FGNGKTCIWV…LYESLKNKLE (162 aa). A polymerase region spans residues 699 to 1032; the sequence is HAIAALCEVF…VDAKYAKSWY (334 aa).

Belongs to the DNA polymerase type-A family.

The protein resides in the mitochondrion. It catalyses the reaction DNA(n) + a 2'-deoxyribonucleoside 5'-triphosphate = DNA(n+1) + diphosphate. Its activity is regulated as follows. Not inhibited by aphidicolin. Functionally, in addition to polymerase activity, this DNA polymerase exhibits 5'-3' exonuclease activity. May be required for DNA replication and accumulation in mitochondria. This chain is DNA polymerase I B, mitochondrial, found in Oryza sativa subsp. japonica (Rice).